Here is a 119-residue protein sequence, read N- to C-terminus: MMNKKDARLRRARQTRAKIAELKVNRLTVFRTNSHIYAQVYSPCGTQVLASASTAEAEVRKELNGNGATVAAATVVGKRVAEKAKAAGVETVAFDRAGFRFHGRVKALADAAREAGLKF.

The protein belongs to the universal ribosomal protein uL18 family. Part of the 50S ribosomal subunit; part of the 5S rRNA/L5/L18/L25 subcomplex. Contacts the 5S and 23S rRNAs.

In terms of biological role, this is one of the proteins that bind and probably mediate the attachment of the 5S RNA into the large ribosomal subunit, where it forms part of the central protuberance. In Cupriavidus metallidurans (strain ATCC 43123 / DSM 2839 / NBRC 102507 / CH34) (Ralstonia metallidurans), this protein is Large ribosomal subunit protein uL18.